Here is a 152-residue protein sequence, read N- to C-terminus: Protein SprT-like (152 aa).

One can recognise a SprT-like domain in the interval 7 to 148 (QRLVEEVSLQ…GKCKGKLILI (142 aa)). Zn(2+) is bound at residue histidine 67. Glutamate 68 is a catalytic residue. Residue histidine 71 coordinates Zn(2+).

Belongs to the SprT family. The cofactor is Zn(2+).

It localises to the cytoplasm. The protein is Protein SprT-like of Bacillus cereus (strain AH187).